The chain runs to 472 residues: Bifunctional protein HldE (472 aa).

Residues Met1 to Asn315 are ribokinase. Asn192–Glu195 provides a ligand contact to ATP. Residue Asp260 is part of the active site. A cytidylyltransferase region spans residues Phe340–Lys472.

It in the N-terminal section; belongs to the carbohydrate kinase PfkB family. The protein in the C-terminal section; belongs to the cytidylyltransferase family. As to quaternary structure, homodimer.

It catalyses the reaction D-glycero-beta-D-manno-heptose 7-phosphate + ATP = D-glycero-beta-D-manno-heptose 1,7-bisphosphate + ADP + H(+). The enzyme catalyses D-glycero-beta-D-manno-heptose 1-phosphate + ATP + H(+) = ADP-D-glycero-beta-D-manno-heptose + diphosphate. Its pathway is nucleotide-sugar biosynthesis; ADP-L-glycero-beta-D-manno-heptose biosynthesis; ADP-L-glycero-beta-D-manno-heptose from D-glycero-beta-D-manno-heptose 7-phosphate: step 1/4. It participates in nucleotide-sugar biosynthesis; ADP-L-glycero-beta-D-manno-heptose biosynthesis; ADP-L-glycero-beta-D-manno-heptose from D-glycero-beta-D-manno-heptose 7-phosphate: step 3/4. In terms of biological role, catalyzes the phosphorylation of D-glycero-D-manno-heptose 7-phosphate at the C-1 position to selectively form D-glycero-beta-D-manno-heptose-1,7-bisphosphate. Its function is as follows. Catalyzes the ADP transfer from ATP to D-glycero-beta-D-manno-heptose 1-phosphate, yielding ADP-D-glycero-beta-D-manno-heptose. This Campylobacter concisus (strain 13826) protein is Bifunctional protein HldE.